Reading from the N-terminus, the 94-residue chain is Large ribosomal subunit protein eL42 (94 aa).

Zn(2+) is bound by residues Cys11, Cys14, Cys70, and Cys73. The C4-type zinc finger occupies 11–73 (CPYCKKHTIH…IDLRFKCTEC (63 aa)).

It belongs to the eukaryotic ribosomal protein eL42 family. Part of the 50S ribosomal subunit. Zn(2+) serves as cofactor.

Binds to the 23S rRNA. This is Large ribosomal subunit protein eL42 from Methanocaldococcus jannaschii (strain ATCC 43067 / DSM 2661 / JAL-1 / JCM 10045 / NBRC 100440) (Methanococcus jannaschii).